We begin with the raw amino-acid sequence, 1726 residues long: Transcription elongation factor SPT6 (1726 aa).

Composition is skewed to acidic residues over residues 1 to 14, 32 to 49, and 59 to 80; these read MSDF…ESEE, EEED…DDQD, and NDDD…DSED. A disordered region spans residues 1-197; sequence MSDFVESEAE…DDGQPLKKPK (197 aa). An N-acetylserine modification is found at serine 2. An interaction with IWS1 region spans residues 2–485; it reads SDFVESEAEE…PKMQNAAKAS (484 aa). The tract at residues 2-916 is interaction with PAAF1; it reads SDFVESEAEE…PPVLRQAVSL (915 aa). Positions 3-51 form a coiled coil; that stretch reads DFVESEAEESEEEYNHEGEVVPRVTKKFVEEEDDDEEEEEENLDDQDER. A phosphoserine mark is found at serine 7 and serine 12. Residues serine 73, serine 78, and serine 91 each carry the phosphoserine modification. The span at 95-105 shows a compositional bias: acidic residues; sequence RLEDDDFDLIE. Over residues 111-122 the composition is skewed to basic residues; the sequence is KVKRGQKYRRVK. Serine 125 carries the phosphoserine modification. 3 stretches are compositionally biased toward acidic residues: residues 126–136, 150–160, and 169–190; these read DDDEDDEEEYG, FQDEEGEEGQE, and PDEE…DDDG. Serine 267 carries the phosphoserine modification. Residues 317–1300 are interaction with KDM6A; the sequence is ADWIYRNAFA…NEWKLPKDTY (984 aa). The segment at 489–520 is disordered; sequence LKRIKEDGDEEGEGEEAEDEEQRGPELKQASR. A compositionally biased stretch (acidic residues) spans 495-509; the sequence is DGDEEGEGEEAEDEE. Basic and acidic residues predominate over residues 510–520; the sequence is QRGPELKQASR. The residue at position 743 (lysine 743) is an N6-acetyllysine. In terms of domain architecture, S1 motif spans 1213–1282; sequence WNHFDSGSCP…EKFSADLTCR (70 aa). The 107-residue stretch at 1325 to 1431 folds into the SH2 domain; sequence YIKRVIAHPS…FARDLLNHKY (107 aa). Residue tyrosine 1515 is modified to Phosphotyrosine. Threonine 1523 carries the phosphothreonine modification. Serine 1526 carries the phosphoserine modification. Phosphothreonine occurs at positions 1530 and 1532. The residue at position 1535 (serine 1535) is a Phosphoserine. Threonine 1539 bears the Phosphothreonine mark. The segment at 1633 to 1726 is interaction with histone H2B and H3; the sequence is PQYHQLQAST…ATPLLDEMDR (94 aa). Residues 1636–1726 form a disordered region; sequence HQLQASTTPQ…ATPLLDEMDR (91 aa). Positions 1639–1664 are enriched in low complexity; the sequence is QASTTPQSTQAQPQPSSSSRQRQQQP. The residue at position 1676 (lysine 1676) is an N6-acetyllysine. Residue threonine 1697 is modified to Phosphothreonine. Residues serine 1701 and serine 1703 each carry the phosphoserine modification. Residues threonine 1709 and threonine 1718 each carry the phosphothreonine modification.

It belongs to the SPT6 family. In terms of assembly, interacts with RNA polymerase II and the DRB sensitivity-inducing factor complex (DSIF complex), which is composed of SUPT5H and SUPT4H1 or SUPT4H2. Interacts with PAAF1. Interacts with histone H2B and H3. Interacts (via SH2 domain) with POLR2A phosphorylated at 'Ser-2'. Interacts (via SH2 domain) with SETD1A. Interacts with IWS1, KDM6A and AICDA. Interacts with WDR43. Dephosphorylated at Ser-1530 by the PNUTS-PP1 complex during RNA polymerase II transcription pause-release. As to expression, ubiquitously expressed.

It localises to the nucleus. Functionally, histone H3-H4 chaperone that plays a key role in the regulation of transcription elongation and mRNA processing. Enhances the transcription elongation by RNA polymerase II (RNAPII) and is also required for the efficient activation of transcriptional elongation by the HIV-1 nuclear transcriptional activator, Tat. Besides chaperoning histones in transcription, acts to transport and splice mRNA by forming a complex with IWS1 and the C-terminal domain (CTD) of the RNAPII subunit RPB1 (POLR2A). The SUPT6H:IWS1:CTD complex recruits mRNA export factors (ALYREF/THOC4, EXOSC10) as well as histone modifying enzymes (such as SETD2), to ensure proper mRNA splicing, efficient mRNA export and elongation-coupled H3K36 methylation, a signature chromatin mark of active transcription. SUPT6H via its association with SETD1A, regulates both class-switch recombination and somatic hypermutation through formation of H3K4me3 epigenetic marks on activation-induced cytidine deaminase (AICDA) target loci. Promotes the activation of the myogenic gene program by entailing erasure of the repressive H3K27me3 epigenetic mark through stabilization of the chromatin interaction of the H3K27 demethylase KDM6A. This Mus musculus (Mouse) protein is Transcription elongation factor SPT6 (Supt6h).